A 183-amino-acid polypeptide reads, in one-letter code: ESX-1 secretion-associated protein EspH (183 aa).

The span at 1–16 (MVDPPGNDDDHGDLDA) shows a compositional bias: acidic residues. Positions 1 to 32 (MVDPPGNDDDHGDLDALDFSAAHTNEASPLDA) are disordered.

This chain is ESX-1 secretion-associated protein EspH, found in Mycobacterium tuberculosis (strain ATCC 25618 / H37Rv).